We begin with the raw amino-acid sequence, 284 residues long: UTP--glucose-1-phosphate uridylyltransferase (284 aa).

This sequence belongs to the UDPGP type 2 family.

The enzyme catalyses alpha-D-glucose 1-phosphate + UTP + H(+) = UDP-alpha-D-glucose + diphosphate. This Komagataeibacter xylinus (Gluconacetobacter xylinus) protein is UTP--glucose-1-phosphate uridylyltransferase (celA).